A 1119-amino-acid chain; its full sequence is Nuclear matrix constituent protein 1 (1119 aa).

Coiled-coil stretches lie at residues 140–226 and 328–488; these read LAEL…LYQQ and LQNR…LDER. Disordered stretches follow at residues 846–884, 903–974, 989–1015, and 1046–1109; these read LDVEDSQQSDVRAGNRKPGKRAKGRVRRKRSAKEVAEEA, LASA…PTGR, NGALSDPNKGKEKEIDDGGGIGEEIPD, and GINA…EVSM. 2 stretches are compositionally biased toward basic residues: residues 859 to 876 and 920 to 929; these read GNRKPGKRAKGRVRRKRS and KRTRNSRKRN. Over residues 1075-1085 the composition is skewed to polar residues; sequence TPEQSRGYQNQ.

Belongs to the CRWN family.

The protein resides in the nucleus matrix. Its subcellular location is the nucleus lamina. Architectural component of nuclear structure that plays different roles in controlling nuclear size and morphology. The protein is Nuclear matrix constituent protein 1 of Daucus carota subsp. sativus (Carrot).